We begin with the raw amino-acid sequence, 179 residues long: Large ribosomal subunit protein uL6 (179 aa).

The protein belongs to the universal ribosomal protein uL6 family. In terms of assembly, part of the 50S ribosomal subunit.

Its function is as follows. This protein binds to the 23S rRNA, and is important in its secondary structure. It is located near the subunit interface in the base of the L7/L12 stalk, and near the tRNA binding site of the peptidyltransferase center. In Leptospira borgpetersenii serovar Hardjo-bovis (strain JB197), this protein is Large ribosomal subunit protein uL6.